Reading from the N-terminus, the 309-residue chain is D-galacturonate reductase (309 aa).

Residue Tyr50 is the Proton donor of the active site. Residue His109 participates in substrate binding. Residue 210-264 coordinates NADP(+); sequence SPLGSTGSPLMSADPVVKIAEKKGISPTTVLLSYHVNRGSTVLAKSVTPARIKAN.

Belongs to the aldo/keto reductase family.

The catalysed reaction is L-galactonate + NADP(+) = aldehydo-D-galacturonate + NADPH + H(+). The protein operates within carbohydrate acid metabolism. Functionally, mediates the reduction of D-galacturonate to L-galactonate, the first step in D-galacturonate catabolic process. Also has activity with D-glucuronate and DL-glyceraldehyde. No activity is observed with D-glucose, D-fructose, D-xylose, D-galactose, L-arabinose or D-mannose. Activity is seen only with NADPH and not with NADH. In Hypocrea jecorina (Trichoderma reesei), this protein is D-galacturonate reductase (gar1).